Consider the following 196-residue polypeptide: Beta-crystallin A4 (196 aa).

Residue threonine 2 is modified to N-acetylthreonine. The tract at residues 2–11 (TLQCTKSAGH) is N-terminal arm. 2 Beta/gamma crystallin 'Greek key' domains span residues 12 to 51 (WRVV…KVLS) and 52 to 98 (GAWV…RPVA). The segment at 99 to 104 (CANHRD) is connecting peptide. Beta/gamma crystallin 'Greek key' domains lie at 105-146 (SRLT…HVQS) and 147-195 (GAWV…RRIQ).

As to quaternary structure, homo/heterodimer, or complexes of higher-order. The structure of beta-crystallin oligomers seems to be stabilized through interactions between the N-terminal arms.

In terms of biological role, crystallins are the dominant structural components of the vertebrate eye lens. The polypeptide is Beta-crystallin A4 (Cryba4) (Rattus norvegicus (Rat)).